The following is a 587-amino-acid chain: Arginine--tRNA ligase (587 aa).

A 'HIGH' region motif is present at residues 127–137; it reads ANPTGPLHVGH.

Belongs to the class-I aminoacyl-tRNA synthetase family. In terms of assembly, monomer.

The protein resides in the cytoplasm. The catalysed reaction is tRNA(Arg) + L-arginine + ATP = L-arginyl-tRNA(Arg) + AMP + diphosphate. The polypeptide is Arginine--tRNA ligase (Dechloromonas aromatica (strain RCB)).